The sequence spans 357 residues: Trans-enoyl reductase buaC (357 aa).

50–53 (VDTK) provides a ligand contact to NADP(+). Residue 135–142 (TALVSACM) participates in substrate binding. Residues 170–173 (STAT), 193–196 (SPKN), tyrosine 211, and 258–259 (LN) each bind NADP(+). 278–282 (ATLIT) lines the substrate pocket. Residue 347–348 (IS) coordinates NADP(+).

The protein belongs to the zinc-containing alcohol dehydrogenase family. In terms of assembly, monomer.

It participates in mycotoxin biosynthesis. Functionally, trans-enoyl reductase; part of the gene cluster that mediates the biosynthesis of burnettramic acids, an unusual class of bolaamphiphilic pyrrolizidinediones that display potent antibacterial, antifungal, and cytotoxic activities. The first step of the biosynthesis of burnettramic acids is the hydroxylation of proline by the proline hydroxylase buaE to generate 4-hydroxyproline. The PKS-NRPS buaA and trans-enoyl reductase buaC construct the highly reduced polyketide chain, and the condensation (C) domain of buaA then catalyzes the amide bond formation with the activated 4-hydroxyproline. This is followed by the R domain releasing the nascent polyketide-peptide directly via a Dieckmann condensation to afford a tetramic acid fused to the hydroxyproline, generating the bicyclic pyrrolidinedione moiety. The cytochrome P450 monooxygenases buaD and buaG are likely responsible for the multiple hydroxylations on the polyketide chain and its terminus, although in the heterologous context, buaD does not appear to be required. Therefore, while buaG may be a multifunctional cytochrome P450 monooxygenase, it cannot be ruled out that the two secondary alcohols on the polyketide chain could have an acetate origin. Finally, the glycosyltransferase buaB transfers beta-D-mannose to the aglycone burnettramic acid A to form burnettramic acid A. Burnettramic acid B is a minor cis-pyrrolizidine epimer of burnettramic acid A and it is likely that small amounts of it form naturally in acidic environments. This Petromyces alliaceus (Aspergillus alliaceus) protein is Trans-enoyl reductase buaC.